A 625-amino-acid chain; its full sequence is MALPTARPLLGSCGSPICSRSFLLLLLSLGWIPRLQTQTTKTSQEATLLHAVNGAADFASLPTGLFLGLTCEEVSDLSMEQAKGLAMAVRQKNITLRGHQLRCLARRLPRHLTDEELNALPLDLLLFLNPAMFPGQQACAHFFSLISKANVDVLPRRSLERQRLLMEALKCQGVYGFQVSEADVRALGGLACDLPGKFVARSSEVLLPWLAGCQGPLDQSQEKAVREVLRSGRTQYGPPSKWSVSTLDALQSLVAVLDESIVQSIPKDVKAEWLQHISRDPSRLGSKLTVIHPRFRRDAEQKACPPGKEPYKVDEDLIFYQNWELEACVDGTMLARQMDLVNEIPFTYEQLSIFKHKLDKTYPQGYPESLIQQLGHFFRYVSPEDIHQWNVTSPDTVKTLLKVSKGQKMNAQAIALVACYLRGGGQLDEDMVKALGDIPLSYLCDFSPQDLHSVPSSVMWLVGPQDLDKCSQRHLGLLYQKACSAFQNVSGLEYFEKIKTFLGGASVKDLRALSQHNVSMDIATFKRLQVDSLVGLSVAEVQKLLGPNIVDLKTEEDKSPVRDWLFRQHQKDLDRLGLGLQGGIPNGYLVLDFNVREAFSSRASLLGPGFVLIWIPALLPALRLS.

The N-terminal stretch at 1-35 is a signal peptide; sequence MALPTARPLLGSCGSPICSRSFLLLLLSLGWIPRL. N93 carries an N-linked (GlcNAc...) asparagine glycan. S202 bears the Phosphoserine mark. A disulfide bond links C304 and C328. 3 N-linked (GlcNAc...) asparagine glycosylation sites follow: N390, N488, and N517. S600 is lipidated: GPI-anchor amidated serine. The propeptide at 601–625 is removed in mature form; that stretch reads SRASLLGPGFVLIWIPALLPALRLS.

The protein belongs to the mesothelin family. In terms of assembly, interacts with MUC16. Proteolytically cleaved by a furin-like convertase to generate megakaryocyte-potentiating factor (MPF), and the cleaved form of mesothelin. Highly expressed in lung and heart. Expressed at low levels in spleen, liver, kidney and testis. Present in lung (at protein level).

The protein resides in the cell membrane. It localises to the golgi apparatus. It is found in the secreted. Functionally, membrane-anchored forms may play a role in cellular adhesion. Megakaryocyte-potentiating factor (MPF) may potentiate megakaryocyte colony formation. This Mus musculus (Mouse) protein is Mesothelin (Msln).